Reading from the N-terminus, the 472-residue chain is Collagenase 3 (472 aa).

The N-terminal stretch at 1 to 19 is a signal peptide; sequence MHPGVLAAFLFLSWTRCWS. Positions 20–104 are cleaved as a propeptide — activation peptide; sequence LPVPNDDDDD…PRCGVPDVGE (85 aa). Residues 95-102 carry the Cysteine switch motif; that stretch reads PRCGVPDV. A Zn(2+)-binding site is contributed by Cys97. The N-linked (GlcNAc...) asparagine glycan is linked to Asn118. Asp129 serves as a coordination point for Ca(2+). 2 N-linked (GlcNAc...) asparagine glycosylation sites follow: Asn153 and Asn159. Asp163 contributes to the Ca(2+) binding site. His173 and Asp175 together coordinate Zn(2+). The tract at residues 177 to 247 is interaction with TIMP2; that stretch reads YPFDGPSGLL…GALMFPIYTY (71 aa). 4 residues coordinate Ca(2+): Asp180, Gly181, Ser183, and Leu185. His188 is a binding site for Zn(2+). Residues Asn195, Gly197, and Asp199 each contribute to the Ca(2+) site. His201 contributes to the Zn(2+) binding site. Ca(2+) contacts are provided by Asp203, Asp204, and Glu206. His223 is a binding site for Zn(2+). Residue Glu224 is part of the active site. His227, His233, and Met241 together coordinate Zn(2+). The interaction with collagen stretch occupies residues 269-472; sequence PGDEDPNPKH…VMPTNSLLWC (204 aa). 4 Hemopexin repeats span residues 282–331, 332–378, 380–428, and 429–472; these read PDKC…WPEL, PNRI…GFPK, VKKI…FPGI, and GDKV…LLWC. A disulfide bond links Cys285 and Cys472. The Ca(2+) site is built by Asp292, Ile294, Asp336, and Ala338. Phosphotyrosine; by PKDCC is present on Tyr367. Ca(2+) is bound by residues Ser384, Ala386, Asp433, and Val435.

It belongs to the peptidase M10A family. Requires Ca(2+) as cofactor. Zn(2+) serves as cofactor. In terms of processing, the proenzyme is activated by removal of the propeptide; this cleavage can be effected by other matrix metalloproteinases, such as MMP2, MMP3 and MMP14 and may involve several cleavage steps. Cleavage can also be autocatalytic, after partial maturation by another protease or after treatment with 4-aminophenylmercuric acetate (APMA) (in vitro). Post-translationally, N-glycosylated. Tyrosine phosphorylated by PKDCC/VLK. In terms of tissue distribution, seems to be specific to breast carcinomas.

Its subcellular location is the secreted. The protein localises to the extracellular space. It localises to the extracellular matrix. Functionally, plays a role in the degradation of extracellular matrix proteins including fibrillar collagen, fibronectin, TNC and ACAN. Cleaves triple helical collagens, including type I, type II and type III collagen, but has the highest activity with soluble type II collagen. Can also degrade collagen type IV, type XIV and type X. May also function by activating or degrading key regulatory proteins, such as TGFB1 and CCN2. Plays a role in wound healing, tissue remodeling, cartilage degradation, bone development, bone mineralization and ossification. Required for normal embryonic bone development and ossification. Plays a role in the healing of bone fractures via endochondral ossification. Plays a role in wound healing, probably by a mechanism that involves proteolytic activation of TGFB1 and degradation of CCN2. Plays a role in keratinocyte migration during wound healing. May play a role in cell migration and in tumor cell invasion. The protein is Collagenase 3 (MMP13) of Equus caballus (Horse).